The sequence spans 209 residues: uncharacterized protein (209 aa).

This is an uncharacterized protein from Magallana gigas (Pacific oyster).